Here is a 262-residue protein sequence, read N- to C-terminus: Carbonic anhydrase 13 (262 aa).

Residues 4 to 261 (LSWGYGEHNG…LKGRRVRASF (258 aa)) form the Alpha-carbonic anhydrase domain. The Proton donor/acceptor role is filled by His65. His95, His97, and His120 together coordinate Zn(2+). 200–201 (TV) lines the substrate pocket.

Belongs to the alpha-carbonic anhydrase family. The cofactor is Zn(2+). In terms of tissue distribution, expressed in spleen, lung, kidney, heart, brain, skeletal muscle and testis.

The enzyme catalyses hydrogencarbonate + H(+) = CO2 + H2O. With respect to regulation, inhibited by coumarins, sulfonamide derivatives such as acetazolamide (AZA) and Foscarnet (phosphonoformate trisodium salt). In terms of biological role, reversible hydration of carbon dioxide. The sequence is that of Carbonic anhydrase 13 (Ca13) from Mus musculus (Mouse).